The sequence spans 395 residues: S-adenosylmethionine synthase (395 aa).

Histidine 19 serves as a coordination point for ATP. A Mg(2+)-binding site is contributed by aspartate 21. Glutamate 47 serves as a coordination point for K(+). Positions 60 and 103 each coordinate L-methionine. The segment at 103–113 is flexible loop; that stretch reads QSPDIAQGVNS. ATP-binding positions include 170-172, 236-237, aspartate 245, 251-252, alanine 268, and lysine 272; these read DNK, KF, and RK. Aspartate 245 provides a ligand contact to L-methionine. Lysine 276 contributes to the L-methionine binding site.

This sequence belongs to the AdoMet synthase family. As to quaternary structure, homotetramer; dimer of dimers. Requires Mg(2+) as cofactor. K(+) serves as cofactor.

It localises to the cytoplasm. The catalysed reaction is L-methionine + ATP + H2O = S-adenosyl-L-methionine + phosphate + diphosphate. Its pathway is amino-acid biosynthesis; S-adenosyl-L-methionine biosynthesis; S-adenosyl-L-methionine from L-methionine: step 1/1. Its function is as follows. Catalyzes the formation of S-adenosylmethionine (AdoMet) from methionine and ATP. The overall synthetic reaction is composed of two sequential steps, AdoMet formation and the subsequent tripolyphosphate hydrolysis which occurs prior to release of AdoMet from the enzyme. The polypeptide is S-adenosylmethionine synthase (Rhodopirellula baltica (strain DSM 10527 / NCIMB 13988 / SH1)).